The following is a 420-amino-acid chain: Cysteate-C-fatty acyltransferase (420 aa).

Residues 114 to 115, histidine 219, threonine 247, and alanine 249 each bind pyridoxal 5'-phosphate; that span reads GY. Residue lysine 250 is modified to N6-(pyridoxal phosphate)lysine.

This sequence belongs to the class-II pyridoxal-phosphate-dependent aminotransferase family. Requires pyridoxal 5'-phosphate as cofactor.

The catalysed reaction is isopentadecanoyl-CoA + L-cysteate + H(+) = 3-oxocapnine + CO2 + CoA. Its pathway is lipid metabolism. In terms of biological role, transferase involved in the biosynthesis of capnine, a sulfonolipid present in the outer membrane of gliding Bacteroidetes and essential for gliding motility. Catalyzes the formation of 3-dehydrocapnine from cysteate and isopentadecanoyl-CoA (13-methyl-myristoyl-CoA). In vitro, products are also detected when 13-methyl-myristic acid is substituted with tridecylic acid, myristic acid, pentadecanoic acid or palmitic acid. This chain is Cysteate-C-fatty acyltransferase, found in Capnocytophaga ochracea (strain ATCC 27872 / DSM 7271 / CCUG 9716 / JCM 12966 / NCTC 12371 / SS31 / VPI 2845) (Bacteroides ochraceus).